The chain runs to 142 residues: Sorting nexin-3 (142 aa).

The region spanning 21–138 is the PX domain; that stretch reads NFLEIEVRNP…AAFVQDPNWD (118 aa). The a 1,2-diacyl-sn-glycero-3-phospho-(1D-myo-inositol-3-phosphate) site is built by arginine 64, serine 66, lysine 90, arginine 95, and arginine 104.

It belongs to the sorting nexin family.

Its subcellular location is the cytoplasm. It is found in the golgi apparatus membrane. The protein localises to the prevacuolar compartment membrane. In terms of biological role, required for retention of late Golgi membrane proteins. Component of the retrieval machinery that functions by direct interaction with the cytosolic tails of certain TGN membrane proteins during the sorting/budding process at the prevacuolar compartment. Binds phosphatidylinositol 3-phosphate (PtdIns(P3)). The polypeptide is Sorting nexin-3 (snx-3) (Neurospora crassa (strain ATCC 24698 / 74-OR23-1A / CBS 708.71 / DSM 1257 / FGSC 987)).